A 542-amino-acid polypeptide reads, in one-letter code: Probable cysteine proteinase 361L (542 aa).

Residues cysteine 172, histidine 382, and asparagine 414 contribute to the active site. The helical transmembrane segment at 520 to 540 (TNNWYIYALIIIFILIIFFVL) threads the bilayer.

The protein belongs to the peptidase C1 family.

It is found in the membrane. Its function is as follows. Probable cysteine protease. The protein is Probable cysteine proteinase 361L of Acheta domesticus (House cricket).